The following is a 1114-amino-acid chain: Transcriptional repressor NF-X1 (1114 aa).

Positions 9-26 (GTFKFNTDAAEFIPQERK) are interaction with PABPC1 and PABC4. Disordered stretches follow at residues 20–220 (FIPQ…CRKP), 232–287 (QRRY…PTKS), and 299–325 (KSSR…FPRG). 6 positions are modified to phosphoserine: serine 50, serine 81, serine 92, serine 126, serine 130, and serine 147. Composition is skewed to polar residues over residues 72 to 103 (SYAS…NQPW) and 121 to 142 (LSEQ…SGTN). Composition is skewed to basic and acidic residues over residues 143–156 (PREH…KEVV), 185–202 (LRSE…DENT), 232–248 (QRRY…EGAR), and 304–315 (VNQEKTAVRRQD). Residue serine 320 is modified to Phosphoserine. The RING-type; atypical zinc-finger motif lies at 352 to 403 (CMVCCELVQVTAPVWSCQSCFHVFHLNCIKKWARSPASHADGQSGWRCPACQ). 8 NF-X1-type zinc fingers span residues 447–465 (CPHS…PCPA), 500–519 (CGQH…PCRI), 561–580 (CGSH…PCPR), 626–649 (CGSS…PCSR), 688–707 (CGRH…KCPL), 715–734 (CGLH…TCWQ), 826–848 (CGMH…ACKQ), and 857–878 (CGHP…ACKA). One can recognise an R3H domain in the interval 988–1056 (LKFVSDVEKE…KRNVVVTAVR (69 aa)). Positions 1071–1095 (ERETQTRPPPPIPHHRHQADKAPGS) are disordered.

The protein belongs to the NFX1 family. Interacts with PABPC1 and PABPC4. As to expression, ubiquitously expressed, with highest levels in thymus.

The protein resides in the nucleus. Its function is as follows. Binds to the X-box motif of MHC class II genes and represses their expression. May play an important role in regulating the duration of an inflammatory response by limiting the period in which MHC class II molecules are induced by interferon-gamma. Together with PABPC1 or PABPC4, acts as a coactivator for TERT expression. Mediates E2-dependent ubiquitination. The protein is Transcriptional repressor NF-X1 (Nfx1) of Mus musculus (Mouse).